We begin with the raw amino-acid sequence, 175 residues long: Disulfide bond formation protein B 2 (175 aa).

Residues 1-9 lie on the Cytoplasmic side of the membrane; sequence MYLARTRFL. The helical transmembrane segment at 10–26 threads the bilayer; sequence FFLASLACASIIGTAFY. The Periplasmic portion of the chain corresponds to 27-44; it reads LQQTFGLDPCFLCLIQRA. Cys-36 and Cys-39 are disulfide-bonded. The helical transmembrane segment at 45-61 threads the bilayer; the sequence is AIIACGVLALCAACHAP. Residues 62–68 are Cytoplasmic-facing; the sequence is GPTGMRR. The helical transmembrane segment at 69–85 threads the bilayer; sequence YSLGFLLIALTGLVTAG. At 86-142 the chain is on the periplasmic side; sequence AQVWLQTASADQLIPFITKLEHLLSLLSLDMCIDRLRSDAMFCAEITWTLFGISLPE. A helical membrane pass occupies residues 143 to 161; sequence WSLLAFTGLALLPLYPLFS. Residues 162-175 are Cytoplasmic-facing; that stretch reads EFSHWLATKDRARY.

Belongs to the DsbB family.

The protein resides in the cell inner membrane. In terms of biological role, required for disulfide bond formation in some periplasmic proteins. Acts by oxidizing the DsbA protein. The chain is Disulfide bond formation protein B 2 from Pseudomonas savastanoi pv. phaseolicola (strain 1448A / Race 6) (Pseudomonas syringae pv. phaseolicola (strain 1448A / Race 6)).